Consider the following 438-residue polypeptide: Succinyl-CoA:glutarate CoA-transferase (438 aa).

Residues 1-31 (MLATLARVAALRRTCLFSGRGGGRGLWTGRP) constitute a mitochondrion transit peptide. The active-site Nucleophile is Asp205. The residue at position 394 (Lys394) is an N6-acetyllysine.

This sequence belongs to the CoA-transferase III family. As to expression, highly expressed in kidney. Intermediate expression in liver, skeletal muscle and pancreas. Little to no expression detected in other tissues examined.

The protein localises to the mitochondrion. The enzyme catalyses glutarate + succinyl-CoA = glutaryl-CoA + succinate. It carries out the reaction 3-hydroxy-3-methylglutarate + succinyl-CoA = (3S)-3-hydroxy-3-methylglutaryl-CoA + succinate. The catalysed reaction is 3-hydroxy-3-methylglutarate + glutaryl-CoA = (3S)-3-hydroxy-3-methylglutaryl-CoA + glutarate. It catalyses the reaction hexanedioate + glutaryl-CoA = hexanedioyl-CoA + glutarate. The enzyme catalyses itaconate + glutaryl-CoA = itaconyl-CoA + glutarate. It carries out the reaction itaconate + succinyl-CoA = itaconyl-CoA + succinate. With respect to regulation, inhibited by valsartan and losartan carboxylate. Functionally, coenzyme A (CoA) transferase that reversibly catalyzes the transfer of a CoA moiety from a dicarboxyl-CoA to a dicarboxylate in a metabolite recycling process. Displays preference for succinyl-CoA and glutarate-CoA as dicarboxyl-CoA donors and glutarate, succinate, adipate/hexanedioate, itaconate and 3-hydroxy-3-methylglutarate as dicarboxylate acceptors. Acts on intermediates or end products of lysine and tryptophan degradation pathway, in particular catalyzes succinyl-CoA-dependent reesterification of free glutarate into glutaryl-CoA to prevent renal excretion of glutarate. Upon inflammation, may convert macrophage-derived itaconate to itaconyl-CoA in erythroid precursors where it negatively regulates the TCA cycle and heme synthesis to limit erythroid differentiation in the context of stress erythropoiesis. This is Succinyl-CoA:glutarate CoA-transferase from Homo sapiens (Human).